Reading from the N-terminus, the 389-residue chain is Succinate--CoA ligase [ADP-forming] subunit beta (389 aa).

The region spanning 9 to 244 (KKLFADYGLP…LTQEDPREAE (236 aa)) is the ATP-grasp domain. Residues Lys46, 53-55 (GRG), Glu99, Ala102, and Glu107 each bind ATP. Mg(2+) contacts are provided by Asn199 and Asp213. Substrate-binding positions include Asn264 and 321 to 323 (GIV).

The protein belongs to the succinate/malate CoA ligase beta subunit family. Heterotetramer of two alpha and two beta subunits. Requires Mg(2+) as cofactor.

The enzyme catalyses succinate + ATP + CoA = succinyl-CoA + ADP + phosphate. The catalysed reaction is GTP + succinate + CoA = succinyl-CoA + GDP + phosphate. The protein operates within carbohydrate metabolism; tricarboxylic acid cycle; succinate from succinyl-CoA (ligase route): step 1/1. Its function is as follows. Succinyl-CoA synthetase functions in the citric acid cycle (TCA), coupling the hydrolysis of succinyl-CoA to the synthesis of either ATP or GTP and thus represents the only step of substrate-level phosphorylation in the TCA. The beta subunit provides nucleotide specificity of the enzyme and binds the substrate succinate, while the binding sites for coenzyme A and phosphate are found in the alpha subunit. The sequence is that of Succinate--CoA ligase [ADP-forming] subunit beta from Histophilus somni (strain 2336) (Haemophilus somnus).